A 285-amino-acid chain; its full sequence is Phosphatidylglycerol--prolipoprotein diacylglyceryl transferase (285 aa).

4 helical membrane passes run 26–46 (IALH…WWYV), 71–91 (FVVW…VLIW), 107–127 (WDGG…IIWF), and 133–153 (INIW…IGVV). Arg154 is a binding site for a 1,2-diacyl-sn-glycero-3-phospho-(1'-sn-glycerol). A run of 3 helical transmembrane segments spans residues 194–214 (LMEG…FKAF), 218–238 (GTVA…SEIF), and 256–276 (GFTY…YAIF).

This sequence belongs to the Lgt family.

It is found in the cell inner membrane. The enzyme catalyses L-cysteinyl-[prolipoprotein] + a 1,2-diacyl-sn-glycero-3-phospho-(1'-sn-glycerol) = an S-1,2-diacyl-sn-glyceryl-L-cysteinyl-[prolipoprotein] + sn-glycerol 1-phosphate + H(+). It functions in the pathway protein modification; lipoprotein biosynthesis (diacylglyceryl transfer). Its function is as follows. Catalyzes the transfer of the diacylglyceryl group from phosphatidylglycerol to the sulfhydryl group of the N-terminal cysteine of a prolipoprotein, the first step in the formation of mature lipoproteins. This Bartonella bacilliformis (strain ATCC 35685 / KC583 / Herrer 020/F12,63) protein is Phosphatidylglycerol--prolipoprotein diacylglyceryl transferase.